Consider the following 182-residue polypeptide: Homeobox protein pnx (182 aa).

Residues 1–34 are important for interaction with tle3a; it reads MHEETSNSTLQGKTSFSIADILDPAKFNGTRETR. The disordered stretch occupies residues 24-63; the sequence is PAKFNGTRETREISNNRESPKTTSPTQDPSAPNIANASAA. Residues 29 to 43 are compositionally biased toward basic and acidic residues; it reads GTRETREISNNRESP. The segment covering 52–63 has biased composition (low complexity); that stretch reads PSAPNIANASAA. The homeobox DNA-binding region spans 67–126; it reads SKRIRTAFTLDQLRILERSFQSSHYLSVFERHCIASALGLSETQVKIWFQNRRTKWKKEL.

Belongs to the NK-1 homeobox family. In terms of assembly, interacts with tle3a.

It localises to the nucleus. In terms of biological role, transcriptional repressor. Activity as a repressor is enhanced by binding to the corepressor tle3a. This chain is Homeobox protein pnx, found in Danio rerio (Zebrafish).